A 64-amino-acid chain; its full sequence is Potassium channel toxin alpha-KTx J123 (64 aa).

The signal sequence occupies residues 1–21 (MNKVYLVAVLVLFLALTINES). 3 disulfides stabilise this stretch: Cys30–Cys52, Cys37–Cys60, and Cys41–Cys62.

This sequence belongs to the short scorpion toxin superfamily. Potassium channel inhibitor family. Alpha-KTx 11 subfamily. Expressed by the venom gland.

It is found in the secreted. Functionally, this recombinant toxin inhibits mammalian voltage-gated potassium channels Kv1.3/KCNA3 (IC(50)=0.79 nM) and Kv1.2/KCNA2 (IC(50)=26.4 nM). The protein is Potassium channel toxin alpha-KTx J123 of Olivierus martensii (Manchurian scorpion).